A 304-amino-acid chain; its full sequence is Eukaryotic translation initiation factor 2 subunit alpha (304 aa).

The S1 motif domain occupies 17 to 88 (DDIVMVNVQQ…EKGYIDLSKR (72 aa)). S52 bears the Phosphoserine; by GCN2 mark. Residues 283 to 304 (LESKELDNRSDSEDDEDESDDE) are disordered. The segment covering 284–293 (ESKELDNRSD) has biased composition (basic and acidic residues). Phosphoserine is present on residues S292 and S294. Residues 294–304 (SEDDEDESDDE) show a composition bias toward acidic residues.

Belongs to the eIF-2-alpha family. As to quaternary structure, eukaryotic translation initiation factor 2 eIF2 is a heterotrimeric complex composed of an alpha, a beta and a gamma subunit. The factors eIF-1, eIF-2, eIF-3, TIF5/eIF-5 and methionyl-tRNAi form a multifactor complex (MFC) that may bind to the 40S ribosome. Interacts with CDC123; the interaction is direct. Interacts with GCD1. Phosphorylated; phosphorylation on Ser-52 by the GCN2 protein kinase occurs in response to low amino acid, carbon, or purine availability. Phosphorylation inhibits the guanine nucleotide exchange factor activity of the eIF2B complex.

Its subcellular location is the cytoplasm. The protein localises to the cytosol. In terms of biological role, eIF-2 functions in the early steps of protein synthesis by forming a ternary complex with GTP and initiator tRNA. This complex binds to a 40S ribosomal subunit, followed by mRNA binding to form a 43S pre-initiation complex. Junction of the 60S ribosomal subunit to form the 80S initiation complex is preceded by hydrolysis of the GTP bound to eIF-2 and release of an eIF-2-GDP binary complex. In order for eIF-2 to recycle and catalyze another round of initiation, the GDP bound to eIF-2 must exchange with GTP by way of a reaction catalyzed by eIF2B. This chain is Eukaryotic translation initiation factor 2 subunit alpha, found in Saccharomyces cerevisiae (strain ATCC 204508 / S288c) (Baker's yeast).